Reading from the N-terminus, the 406-residue chain is Phosphopentomutase (406 aa).

Mn(2+) contacts are provided by Asp-10, Asp-305, His-310, Asp-346, His-347, and His-358.

Belongs to the phosphopentomutase family. The cofactor is Mn(2+).

Its subcellular location is the cytoplasm. It carries out the reaction 2-deoxy-alpha-D-ribose 1-phosphate = 2-deoxy-D-ribose 5-phosphate. It catalyses the reaction alpha-D-ribose 1-phosphate = D-ribose 5-phosphate. Its pathway is carbohydrate degradation; 2-deoxy-D-ribose 1-phosphate degradation; D-glyceraldehyde 3-phosphate and acetaldehyde from 2-deoxy-alpha-D-ribose 1-phosphate: step 1/2. In terms of biological role, isomerase that catalyzes the conversion of deoxy-ribose 1-phosphate (dRib-1-P) and ribose 1-phosphate (Rib-1-P) to deoxy-ribose 5-phosphate (dRib-5-P) and ribose 5-phosphate (Rib-5-P), respectively. The sequence is that of Phosphopentomutase from Vibrio cholerae serotype O1 (strain ATCC 39315 / El Tor Inaba N16961).